The sequence spans 317 residues: Serpentine receptor class delta-47 (317 aa).

7 helical membrane-spanning segments follow: residues 8–28 (IFYP…FVVV), 42–62 (VLFC…LLQL), 89–109 (CLYF…LLTI), 128–148 (IVII…IYSV), 185–205 (YLII…GLYT), 239–259 (ACLP…VIGT), and 270–290 (ISVL…YSVA).

The protein belongs to the nematode receptor-like protein srd family.

It localises to the membrane. This is Serpentine receptor class delta-47 (srd-47) from Caenorhabditis elegans.